Here is a 378-residue protein sequence, read N- to C-terminus: Spermatogenic leucine zipper protein 1 (378 aa).

The disordered stretch occupies residues 1–31 (MSDTDNSAEMPARCPSPNPAPGAKQEPPNSG). Ser-106 carries the phosphoserine modification. Residues 116–122 (KNKIRFK) form an interaction with PPP1CC isoform gamma-2 region. The interval 116 to 127 (KNKIRFKDDLFI) is helix-loop-helix motif. Residues 128–193 (HFDPEREQNT…HLRGEYRKLR (66 aa)) form a basic motif region. Residues 182-233 (SLHLRGEYRKLRNNMEQLLQEADHWSKQHNELSELMRSYQECQNETQETTDK) adopt a coiled-coil conformation. Ser-207 is subject to Phosphoserine. Positions 252-273 (LEEQVKKLSHDTHALHLIAALL) are leucine-zipper.

Interacts with PPP1CC isoform gamma-2. This interaction can prevent SPZ1 binding to the E-box and inhibits PPP1CC activity. Post-translationally, phosphorylated by MAPK1/ERK2 and MAPK3/ERK1. Expressed specifically in the testis and epidydimis. In the testis expressed in both germ cells and somatic cells (Sertoli and Leydig cells). Expressed in several tumor cell lines.

It is found in the cytoplasm. Its subcellular location is the nucleus. In terms of biological role, transcription factor that binds to the DNA sequence 5'-CANNTG-3'(E box) and the G-box motif. Directly binds to a guanine-rich region of the PCNA promoter and up-regulates its expression which in turn induces cell transformation and tumor formation. May play an important role in the regulation of cell proliferation and differentiation during spermatogenesis. The chain is Spermatogenic leucine zipper protein 1 (Spz1) from Mus musculus (Mouse).